The chain runs to 557 residues: MFS-type transporter clz4 (557 aa).

14 consecutive transmembrane segments (helical) span residues 22–42 (LIIV…DHNG), 59–79 (SITW…VLYG), 89–109 (ALFV…GFAT), 120–140 (LTGA…TDVV), 150–170 (AVVA…AAGV), 179–199 (GLFW…GYIL), 217–237 (WLGS…VSGP), 245–265 (SLLV…FLFI), 269–289 (LATL…SALL), 319–339 (VISG…SMIA), 346–366 (SGQY…GSLL), 379–399 (VIIV…PMVI), 419–439 (FFRF…LQST), and 479–499 (HVYI…FVWK). The segment covering 505-523 (SRPTENNDDIEHAPARGIE) has biased composition (basic and acidic residues). Residues 505–557 (SRPTENNDDIEHAPARGIEREDEQSSLIYDREPSAVSYGTVEAGEPNRLRRGG) form a disordered region.

This sequence belongs to the major facilitator superfamily. TCR/Tet family.

The protein localises to the membrane. MFS-type transporter; part of the gene cluster that mediates the biosynthesis of squalestatin S1 (SQS1, also known as zaragozic acid A), a heavily oxidized fungal polyketide that offers potent cholesterol lowering activity by targeting squalene synthase (SS). This Cochliobolus lunatus (Filamentous fungus) protein is MFS-type transporter clz4.